Here is a 149-residue protein sequence, read N- to C-terminus: UPF0756 membrane protein BBR47_32760 (149 aa).

A run of 5 helical transmembrane segments spans residues 3 to 23 (WISI…NATV), 48 to 68 (HGLQ…LASG), 85 to 105 (LLAV…TVLM), 106 to 126 (SQNP…VTFF), and 128 to 148 (GVAV…QFLP).

The protein belongs to the UPF0756 family.

It localises to the cell membrane. The protein is UPF0756 membrane protein BBR47_32760 of Brevibacillus brevis (strain 47 / JCM 6285 / NBRC 100599).